The primary structure comprises 515 residues: E3 ubiquitin-protein ligase RNF217 (515 aa).

Disordered regions lie at residues 1-125 (MGEE…VLAQ) and 147-189 (PEAP…ADPL). Gly residues predominate over residues 10–22 (GSGGARASGGGSA). 2 stretches are compositionally biased toward low complexity: residues 39–49 (GPRAAASSSRP) and 147–157 (PEAPSAESPSP). Pro residues predominate over residues 158 to 178 (SESPPQAPLGPIPASPPPSFP). The segment covering 179–189 (SSPLSLPADPL) has biased composition (low complexity). The segment at 232–451 (MVLMCRVCLE…LSIFGCKYRY (220 aa)) is TRIAD supradomain. Residues cysteine 236, cysteine 239, cysteine 256, cysteine 259, cysteine 356, cysteine 359, histidine 364, cysteine 369, cysteine 396, and cysteine 399 each contribute to the Zn(2+) site. Residues 236-282 (CRVCLEDKPIKPLPCCKKAVCEECLKIYLSSQVQLGQVEIKCPVTEC) form an RING-type 1 zinc finger. The IBR-type zinc-finger motif lies at 301–369 (IKYKYFLELG…HSPWHEGVNC (69 aa)). The segment at 396–425 (CPKCKIHIQRTEGCDHMTCSQCNTNFCYRC) adopts an RING-type 2; atypical zinc-finger fold. Cysteine 409 is an active-site residue. 6 residues coordinate Zn(2+): cysteine 414, cysteine 417, cysteine 422, cysteine 425, histidine 438, and cysteine 447. Residues 476 to 496 (LILVLGLALGAIAVVIGLFVF) form a helical membrane-spanning segment.

This sequence belongs to the RBR family. RNF217 subfamily. Interacts with HAX1.

The protein resides in the membrane. The protein localises to the cytoplasm. It catalyses the reaction [E2 ubiquitin-conjugating enzyme]-S-ubiquitinyl-L-cysteine + [acceptor protein]-L-lysine = [E2 ubiquitin-conjugating enzyme]-L-cysteine + [acceptor protein]-N(6)-ubiquitinyl-L-lysine.. The protein operates within protein modification; protein ubiquitination. Functionally, E3 ubiquitin-protein ligase which accepts ubiquitin from E2 ubiquitin-conjugating enzymes in the form of a thioester and then directly transfers the ubiquitin to targeted substrates. Mediates the degradation of the iron exporter ferroportin/SLC40A1 and thus regulates iron homeostasis. This Mus musculus (Mouse) protein is E3 ubiquitin-protein ligase RNF217 (Rnf217).